The primary structure comprises 444 residues: ATP-dependent RNA helicase SrmB (444 aa).

A Q motif motif is present at residues 4–32 (TTFSELELDESLLEALQDKGFTRPTAIQA). A Helicase ATP-binding domain is found at 35–209 (IPPALDGRDV…AERLLEDPVE (175 aa)). ATP is bound at residue 48–55 (APTGTGKT). Positions 157 to 160 (DEAD) match the DEAD box motif. Positions 238–387 (LLVHLLKQPE…ELRPKTRAPS (150 aa)) constitute a Helicase C-terminal domain. The segment covering 382-391 (KTRAPSEKQT) has biased composition (basic and acidic residues). Residues 382-444 (KTRAPSEKQT…TGVPPQTTEE (63 aa)) are disordered. 2 stretches are compositionally biased toward basic residues: residues 394–406 (PSKKVLAKRAEKK) and 414–432 (PRVKKRHRDTKNIGKRRKP).

This sequence belongs to the DEAD box helicase family. SrmB subfamily. In terms of assembly, interacts with the 50S ribosomal subunit. Forms a complex with the 50S ribosomal proteins L4 and L24, and a region near the 5'-end of 23S rRNA.

The protein resides in the cytoplasm. The enzyme catalyses ATP + H2O = ADP + phosphate + H(+). Functionally, DEAD-box RNA helicase involved in the assembly of the 50S ribosomal subunit at low temperature. Exhibits RNA-stimulated ATP hydrolysis and RNA unwinding activity. Acts before DeaD. The sequence is that of ATP-dependent RNA helicase SrmB from Escherichia coli (strain K12).